A 108-amino-acid chain; its full sequence is UPF0060 membrane protein YnfA (108 aa).

Topologically, residues 1–5 (MIKTT) are periplasmic. Residues 6–26 (LLFFATALCEIIGCFLPWLWL) traverse the membrane as a helical segment. Over 27–30 (KRNA) the chain is Cytoplasmic. A helical transmembrane segment spans residues 31–51 (SIWLLLPAGISLALFVWLLTL). Over 52–60 (HPAASGRVY) the chain is Periplasmic. The chain crosses the membrane as a helical span at residues 61–81 (AAYGGVYVCTALMWLRVVDGV). Residues 82–84 (KLT) are Cytoplasmic-facing. A helical transmembrane segment spans residues 85-105 (LYDWTGPLIALCGMLIIVVGW). Residues 106–108 (GRT) lie on the Periplasmic side of the membrane.

This sequence belongs to the UPF0060 family.

Its subcellular location is the cell inner membrane. In Escherichia coli O157:H7, this protein is UPF0060 membrane protein YnfA.